A 91-amino-acid polypeptide reads, in one-letter code: Small ribosomal subunit protein uS19 (91 aa).

The protein belongs to the universal ribosomal protein uS19 family.

Its function is as follows. Protein S19 forms a complex with S13 that binds strongly to the 16S ribosomal RNA. This Prochlorococcus marinus (strain SARG / CCMP1375 / SS120) protein is Small ribosomal subunit protein uS19.